The sequence spans 273 residues: Protein N-terminal and lysine N-methyltransferase EFM7 (273 aa).

Residues 1 to 32 (MSDIEDLASGGLFDEPKDFYKPEEQPGSDSYA) are disordered. Residues 14 to 24 (DEPKDFYKPEE) are compositionally biased toward basic and acidic residues. Residues tryptophan 65, 92–94 (GAG), aspartate 114, tryptophan 161, and serine 183 each bind S-adenosyl-L-methionine.

The protein belongs to the class I-like SAM-binding methyltransferase superfamily. EFM7 family.

It is found in the cytoplasm. Functionally, S-adenosyl-L-methionine-dependent protein methyltransferase that trimethylates the N-terminal glycine 'Gly-2' of elongation factor 1-alpha, before also catalyzing the mono- and dimethylation of 'Lys-3'. The protein is Protein N-terminal and lysine N-methyltransferase EFM7 of Yarrowia lipolytica (strain CLIB 122 / E 150) (Yeast).